Here is a 474-residue protein sequence, read N- to C-terminus: UDP-glycosyltransferase 71C2 (474 aa).

Residues Ser-293, 352 to 354 (APQ), 369 to 377 (HCGWNSILE), and 391 to 394 (YAEQ) contribute to the UDP-alpha-D-glucose site.

The protein belongs to the UDP-glycosyltransferase family.

Possesses low quercetin 3-O-glucosyltransferase, 7-O-glucosyltransferase and 3'-O-glucosyltransferase activities in vitro. Glucosylates other secondary metabolites in vitro like vanillin, trans-resveratrol, curumin and etoposide. This is UDP-glycosyltransferase 71C2 (UGT71C2) from Arabidopsis thaliana (Mouse-ear cress).